The sequence spans 65 residues: Large ribosomal subunit protein bL35 (65 aa).

Belongs to the bacterial ribosomal protein bL35 family.

In Edwardsiella ictaluri (strain 93-146), this protein is Large ribosomal subunit protein bL35.